We begin with the raw amino-acid sequence, 569 residues long: Potassium-transporting ATPase potassium-binding subunit (569 aa).

10 helical membrane-spanning segments follow: residues 3-23 (LMEY…SPVL), 68-88 (AASL…VLML), 136-156 (VGLA…AVAV), 179-199 (VLYV…GQGV), 259-279 (LQML…GGAV), 284-304 (HAWT…CSLY), 384-404 (GLYG…LMVG), 422-442 (AMLA…VAAV), 490-510 (IALA…GVAG), and 534-554 (LLLT…ALAL).

It belongs to the KdpA family. The system is composed of three essential subunits: KdpA, KdpB and KdpC.

The protein localises to the cell inner membrane. Functionally, part of the high-affinity ATP-driven potassium transport (or Kdp) system, which catalyzes the hydrolysis of ATP coupled with the electrogenic transport of potassium into the cytoplasm. This subunit binds the periplasmic potassium ions and delivers the ions to the membrane domain of KdpB through an intramembrane tunnel. This chain is Potassium-transporting ATPase potassium-binding subunit, found in Nitratidesulfovibrio vulgaris (strain ATCC 29579 / DSM 644 / CCUG 34227 / NCIMB 8303 / VKM B-1760 / Hildenborough) (Desulfovibrio vulgaris).